The chain runs to 147 residues: Histone-lysine N-methyltransferase, H3 lysine-37 specific (147 aa).

The region spanning 8–116 (SPLEIRDTER…TNEELCISYG (109 aa)) is the SET domain.

It belongs to the class V-like SAM-binding methyltransferase superfamily. As to quaternary structure, homodimer.

Its subcellular location is the cytoplasm. It localises to the nucleus. The catalysed reaction is L-lysyl(37)-[histone H3] + S-adenosyl-L-methionine = N(6)-methyl-L-lysyl(37)-[histone H3] + S-adenosyl-L-homocysteine + H(+). The enzyme catalyses N(6)-methyl-L-lysyl(37)-[histone H3] + S-adenosyl-L-methionine = N(6),N(6)-dimethyl-L-lysyl(37)-[histone H3] + S-adenosyl-L-homocysteine + H(+). It catalyses the reaction N(6),N(6)-dimethyl-L-lysyl(37)-[histone H3] + S-adenosyl-L-methionine = N(6),N(6),N(6)-trimethyl-L-lysyl(37)-[histone H3] + S-adenosyl-L-homocysteine + H(+). Functionally, histone lysine methyltransferase that specifically mono-, di-, and trimethylates 'Lys-37' of histone H3 to regulate sporulation. This chain is Histone-lysine N-methyltransferase, H3 lysine-37 specific, found in Schizosaccharomyces pombe (strain 972 / ATCC 24843) (Fission yeast).